The primary structure comprises 304 residues: Elongation factor Ts (304 aa).

The tract at residues 79 to 82 is involved in Mg(2+) ion dislocation from EF-Tu; sequence TDFV.

The protein belongs to the EF-Ts family.

It is found in the cytoplasm. Its function is as follows. Associates with the EF-Tu.GDP complex and induces the exchange of GDP to GTP. It remains bound to the aminoacyl-tRNA.EF-Tu.GTP complex up to the GTP hydrolysis stage on the ribosome. This Polaromonas sp. (strain JS666 / ATCC BAA-500) protein is Elongation factor Ts.